The primary structure comprises 79 residues: Submaxillary gland androgen-regulated protein 3B (79 aa).

The signal sequence occupies residues 1-22; it reads MKSLTWILGLWALAACFTPGES. A disordered region spans residues 19–79; that stretch reads PGESQRGPRG…GIFPPPPPQP (61 aa). A Pyrrolidone carboxylic acid modification is found at Q23. Residues 28-79 show a composition bias toward pro residues; sequence GPYPPGPLAPPQPFGPGFVPPPPPPPYGPGRIPPPPPAPYGPGIFPPPPPQP.

The protein belongs to the PROL1/PROL3 family. P-A and D1A are probably degradation products of P-B. As to expression, secreted into saliva by submaxillary gland. Not expressed in heart, brain, lung, liver, skeletal muscle, Kidney, pancreas or placenta.

The protein resides in the secreted. The polypeptide is Submaxillary gland androgen-regulated protein 3B (SMR3B) (Homo sapiens (Human)).